The sequence spans 148 residues: 6,7-dimethyl-8-ribityllumazine synthase (148 aa).

Residues phenylalanine 13, 44 to 46 (ALE), and 73 to 75 (MVI) each bind 5-amino-6-(D-ribitylamino)uracil. 78–79 (ET) serves as a coordination point for (2S)-2-hydroxy-3-oxobutyl phosphate. Catalysis depends on histidine 81, which acts as the Proton donor. A 5-amino-6-(D-ribitylamino)uracil-binding site is contributed by asparagine 106. Arginine 120 provides a ligand contact to (2S)-2-hydroxy-3-oxobutyl phosphate.

This sequence belongs to the DMRL synthase family.

The catalysed reaction is (2S)-2-hydroxy-3-oxobutyl phosphate + 5-amino-6-(D-ribitylamino)uracil = 6,7-dimethyl-8-(1-D-ribityl)lumazine + phosphate + 2 H2O + H(+). It functions in the pathway cofactor biosynthesis; riboflavin biosynthesis; riboflavin from 2-hydroxy-3-oxobutyl phosphate and 5-amino-6-(D-ribitylamino)uracil: step 1/2. In terms of biological role, catalyzes the formation of 6,7-dimethyl-8-ribityllumazine by condensation of 5-amino-6-(D-ribitylamino)uracil with 3,4-dihydroxy-2-butanone 4-phosphate. This is the penultimate step in the biosynthesis of riboflavin. In Agrobacterium fabrum (strain C58 / ATCC 33970) (Agrobacterium tumefaciens (strain C58)), this protein is 6,7-dimethyl-8-ribityllumazine synthase.